A 431-amino-acid chain; its full sequence is Chorismate synthase 2, chloroplastic (431 aa).

A chloroplast-targeting transit peptide spans M1–A48. The tract at residues D93 to D141 is disordered. Polar residues predominate over residues C112–S126.

It belongs to the chorismate synthase family. In terms of assembly, homotetramer. FMNH2 serves as cofactor. As to expression, predominantly expressed in flowers and roots and, to a lesser extent, in stems, leaves, and cotyledons.

The protein localises to the plastid. It is found in the chloroplast. It carries out the reaction 5-O-(1-carboxyvinyl)-3-phosphoshikimate = chorismate + phosphate. It functions in the pathway metabolic intermediate biosynthesis; chorismate biosynthesis; chorismate from D-erythrose 4-phosphate and phosphoenolpyruvate: step 7/7. In terms of biological role, catalyzes the last common step of the biosynthesis of aromatic amino acids, produced via the shikimic acid pathway. In Solanum lycopersicum (Tomato), this protein is Chorismate synthase 2, chloroplastic (CS2).